The primary structure comprises 171 residues: Co-chaperone protein HscB (171 aa).

The region spanning 2–74 is the J domain; sequence DYFTLFGLPA…LTRAEYLLSL (73 aa).

The protein belongs to the HscB family. Interacts with HscA and stimulates its ATPase activity. Interacts with IscU.

Co-chaperone involved in the maturation of iron-sulfur cluster-containing proteins. Seems to help targeting proteins to be folded toward HscA. The protein is Co-chaperone protein HscB of Salmonella paratyphi A (strain AKU_12601).